The following is a 312-amino-acid chain: Apulose-4-phosphate transketolase subunit B (312 aa).

The protein belongs to the transketolase family. As to quaternary structure, probable heterodimer composed of AptA and AptB. It depends on thiamine diphosphate as a cofactor.

It catalyses the reaction apulose 4-phosphate + D-glyceraldehyde 3-phosphate = D-xylulose 5-phosphate + dihydroxyacetone phosphate. The protein operates within carbohydrate metabolism. Involved in catabolism of D-apiose. Catalyzes the transfer of the glycolaldehyde group from apulose-4-phosphate to D-glyceraldehyde 3-phosphate, generating dihydroxyacetone phosphate and D-xylulose-5-phosphate. The sequence is that of Apulose-4-phosphate transketolase subunit B from Phocaeicola vulgatus (strain ATCC 8482 / DSM 1447 / JCM 5826 / CCUG 4940 / NBRC 14291 / NCTC 11154) (Bacteroides vulgatus).